The following is a 295-amino-acid chain: ATP synthase gamma chain (295 aa).

It belongs to the ATPase gamma chain family. As to quaternary structure, F-type ATPases have 2 components, CF(1) - the catalytic core - and CF(0) - the membrane proton channel. CF(1) has five subunits: alpha(3), beta(3), gamma(1), delta(1), epsilon(1). CF(0) has three main subunits: a, b and c.

It is found in the cell inner membrane. Functionally, produces ATP from ADP in the presence of a proton gradient across the membrane. The gamma chain is believed to be important in regulating ATPase activity and the flow of protons through the CF(0) complex. This chain is ATP synthase gamma chain, found in Sulfurimonas denitrificans (strain ATCC 33889 / DSM 1251) (Thiomicrospira denitrificans (strain ATCC 33889 / DSM 1251)).